A 564-amino-acid chain; its full sequence is ATP-dependent RNA helicase DBP3 (564 aa).

The segment at 31–125 is disordered; sequence TKQQTMSKDK…TNYTQSSKLS (95 aa). Residues 58 to 73 are compositionally biased toward basic and acidic residues; the sequence is ADSKKQRKLEKQEKKD. The segment covering 74–96 has biased composition (basic residues); that stretch reads KKDKKDKKEKKEKKEKKHKKEKK. The span at 112-125 shows a compositional bias: low complexity; that stretch reads SSSSTNYTQSSKLS. The Q motif motif lies at 155 to 181; the sequence is LSFDQVQLTSAITSKLSKFDKPTPIQS. Residues 184–356 form the Helicase ATP-binding domain; that stretch reads WPFLLSGKDV…NNFMNSPVKV (173 aa). 197–204 contributes to the ATP binding site; that stretch reads AETGSGKT. The DEAD box signature appears at 303–306; sequence DEAD. One can recognise a Helicase C-terminal domain in the interval 385-534; that stretch reads KLIQLLRKYN…PVPEELLKFG (150 aa).

Belongs to the DEAD box helicase family. DDX5/DBP2 subfamily.

The protein resides in the nucleus. Its subcellular location is the nucleolus. It catalyses the reaction ATP + H2O = ADP + phosphate + H(+). Functionally, ATP-dependent RNA helicase required for 60S ribosomal subunit synthesis. Involved in efficient pre-rRNA processing, predominantly at site A3, which is necessary for the normal formation of 25S and 5.8S rRNAs. The protein is ATP-dependent RNA helicase DBP3 (DBP3) of Candida albicans (strain SC5314 / ATCC MYA-2876) (Yeast).